A 480-amino-acid polypeptide reads, in one-letter code: Uronate isomerase (480 aa).

This sequence belongs to the metallo-dependent hydrolases superfamily. Uronate isomerase family.

The enzyme catalyses D-glucuronate = D-fructuronate. It carries out the reaction aldehydo-D-galacturonate = keto-D-tagaturonate. The protein operates within carbohydrate metabolism; pentose and glucuronate interconversion. This Phenylobacterium zucineum (strain HLK1) protein is Uronate isomerase.